Reading from the N-terminus, the 538-residue chain is Putative cysteine ligase BshC (538 aa).

Residues 419–445 (IEAKRQIQAMEQLLAEKYSELASYLEE) adopt a coiled-coil conformation.

Belongs to the BshC family.

Involved in bacillithiol (BSH) biosynthesis. May catalyze the last step of the pathway, the addition of cysteine to glucosamine malate (GlcN-Mal) to generate BSH. The polypeptide is Putative cysteine ligase BshC (Lysinibacillus sphaericus (strain C3-41)).